The following is a 61-amino-acid chain: Large ribosomal subunit protein uL30 (61 aa).

Belongs to the universal ribosomal protein uL30 family. In terms of assembly, part of the 50S ribosomal subunit.

The polypeptide is Large ribosomal subunit protein uL30 (Shewanella halifaxensis (strain HAW-EB4)).